Reading from the N-terminus, the 183-residue chain is Protein Syd (183 aa).

It belongs to the Syd family.

It localises to the cell inner membrane. Interacts with the SecY protein in vivo. May bind preferentially to an uncomplexed state of SecY, thus functioning either as a chelating agent for excess SecY in the cell or as a regulatory factor that negatively controls the translocase function. The protein is Protein Syd of Aliivibrio fischeri (strain ATCC 700601 / ES114) (Vibrio fischeri).